Consider the following 92-residue polypeptide: Acylphosphatase (92 aa).

One can recognise an Acylphosphatase-like domain in the interval 5–92 (CIAAYVYGVV…TPFETFKIRY (88 aa)). Catalysis depends on residues arginine 20 and asparagine 38.

Belongs to the acylphosphatase family.

The catalysed reaction is an acyl phosphate + H2O = a carboxylate + phosphate + H(+). The protein is Acylphosphatase (acyP) of Yersinia enterocolitica serotype O:8 / biotype 1B (strain NCTC 13174 / 8081).